The sequence spans 409 residues: Elongation factor Tu (409 aa).

The tr-type G domain maps to 10–214 (KPHLNIGTIG…AVDSFIPTPE (205 aa)). The tract at residues 19 to 26 (GHVDHGKT) is G1. 19–26 (GHVDHGKT) provides a ligand contact to GTP. Threonine 26 lines the Mg(2+) pocket. The tract at residues 60-64 (GITIN) is G2. Positions 81–84 (DCPG) are G3. GTP contacts are provided by residues 81–85 (DCPGH) and 136–139 (NKED). Positions 136 to 139 (NKED) are G4. The interval 174-176 (SGL) is G5.

Belongs to the TRAFAC class translation factor GTPase superfamily. Classic translation factor GTPase family. EF-Tu/EF-1A subfamily. Monomer.

It is found in the cytoplasm. The enzyme catalyses GTP + H2O = GDP + phosphate + H(+). Its function is as follows. GTP hydrolase that promotes the GTP-dependent binding of aminoacyl-tRNA to the A-site of ribosomes during protein biosynthesis. The chain is Elongation factor Tu from Nostoc punctiforme (strain ATCC 29133 / PCC 73102).